A 611-amino-acid chain; its full sequence is MEKQANVYVNGKLIDTSKDPENLVKSLRIQRRSGKLSPNTSISFNEESNDIHISTDGGRAVRPLVVVENGFSKLTNELLEKVNNNELTFEYLVKTGVIEFLDAEEEENARIAMYNDEITFENTHVEIDPLVILGIGAGVAPYPEHNSAPRITMAAAMGKQSLGIPMANIKWRMDTRGHLLHYPQVPLVRTKHQEILGFDKRPAGQNFVVAVMSYEGYNMEDAFVINKASLERGLGRSTFFRSYESFEKRYPGGQLDKFEVPEKGVRGYRAEEAYRNLGDDGLIDLESEVRSGDVILGKTSPPRFLEEQEITLQTKSQRRDTSVTIRHGEEGVVDLVILSETKEGNRLGKVRVRDLRVPEFGDKFASRHGQKGVIGLVVPQEDLPFTEDGVIPDLIINPHAIPSRMTIGQVLEMIGGKVGSLECRRVDGTIFSGEGEWALRHALENYGFTHSGKETMYDGKTGRKLECEIFVGVAYYQKLHHLVAGKIHARSRGPIQVLTRQPTEGRAREGGLRFGEMERDVLVAHGAALLLKERLLDESDPHEDYVCAKCGEIAIFDYKRGMKFCPVCGESEDIQDNRKIPPVKIAYAFKLLLDELKSMGIDPKLKLKDRA.

The Zn(2+) site is built by C547, C550, C565, and C568.

It belongs to the RNA polymerase beta chain family. As to quaternary structure, part of the RNA polymerase complex. Zn(2+) is required as a cofactor.

It localises to the cytoplasm. It carries out the reaction RNA(n) + a ribonucleoside 5'-triphosphate = RNA(n+1) + diphosphate. DNA-dependent RNA polymerase (RNAP) catalyzes the transcription of DNA into RNA using the four ribonucleoside triphosphates as substrates. The Rpo2 subunit (Rpo2N and Rpo2C in this organism) is implicated in DNA promoter recognition and in nucleotide binding. In Methanococcus vannielii (strain ATCC 35089 / DSM 1224 / JCM 13029 / OCM 148 / SB), this protein is DNA-directed RNA polymerase subunit Rpo2C.